A 326-amino-acid chain; its full sequence is Isoaspartyl peptidase/L-asparaginase (326 aa).

The active-site Nucleophile is the Thr185. Substrate is bound by residues 213–216 and 236–239; these read RVGD and TGHG.

It belongs to the Ntn-hydrolase family. Heterodimer of an alpha and beta chain produced by autocleavage. This heterodimer may then dimerize in turn, giving rise to a heterotetramer. Cleaved into an alpha and beta chain by autocatalysis; this activates the enzyme. The N-terminal residue of the beta subunit is responsible for the nucleophile hydrolase activity. As to expression, high expression in the heart and brain while low to minimal expression in the other tissues. In ocular tissues, high levels is observed in the optic nerve and retina while relatively low levels of expression are detected in the iris-ciliary body, lens or retinal pigment epithelium.

The protein localises to the cytoplasm. The enzyme catalyses L-asparagine + H2O = L-aspartate + NH4(+). It carries out the reaction Cleavage of a beta-linked Asp residue from the N-terminus of a polypeptide.. Has both L-asparaginase and beta-aspartyl peptidase activity. May be involved in the production of L-aspartate, which can act as an excitatory neurotransmitter in some brain regions. Is highly active with L-Asp beta-methyl ester. Besides, has catalytic activity toward beta-aspartyl dipeptides and their methyl esters, including beta-L-Asp-L-Phe, beta-L-Asp-L-Phe methyl ester (aspartame), beta-L-Asp-L-Ala, beta-L-Asp-L-Leu and beta-L-Asp-L-Lys. Does not have aspartylglucosaminidase activity and is inactive toward GlcNAc-L-Asn. Likewise, has no activity toward glutamine. The polypeptide is Isoaspartyl peptidase/L-asparaginase (Asrgl1) (Mus musculus (Mouse)).